Reading from the N-terminus, the 241-residue chain is tRNA (guanine-N(1)-)-methyltransferase (241 aa).

S-adenosyl-L-methionine is bound by residues glycine 123 and 143–148; that span reads IGDYVL.

This sequence belongs to the RNA methyltransferase TrmD family. Homodimer.

The protein resides in the cytoplasm. The enzyme catalyses guanosine(37) in tRNA + S-adenosyl-L-methionine = N(1)-methylguanosine(37) in tRNA + S-adenosyl-L-homocysteine + H(+). Functionally, specifically methylates guanosine-37 in various tRNAs. The chain is tRNA (guanine-N(1)-)-methyltransferase from Roseobacter denitrificans (strain ATCC 33942 / OCh 114) (Erythrobacter sp. (strain OCh 114)).